The sequence spans 96 residues: MSQNILRHELIGLNLEVVKSTDSGLISTKGRVINETRNTLVLEKENGKEITLVKEISTFRIQFESENVVKIDIDGRLLVGRPEDRLKRKIKQLYSY.

It belongs to the eukaryotic/archaeal RNase P protein component 1 family. Consists of a catalytic RNA component and at least 5 protein subunits.

Its subcellular location is the cytoplasm. The catalysed reaction is Endonucleolytic cleavage of RNA, removing 5'-extranucleotides from tRNA precursor.. Functionally, part of ribonuclease P, a protein complex that generates mature tRNA molecules by cleaving their 5'-ends. The protein is Ribonuclease P protein component 1 of Methanococcus maripaludis (strain DSM 14266 / JCM 13030 / NBRC 101832 / S2 / LL).